The following is a 198-amino-acid chain: Putative glutathione S-transferase alpha-5 (198 aa).

One can recognise a GST N-terminal domain in the interval 2 to 78; sequence TKPTLTYFPV…YISEKHDFRG (77 aa). Glutathione-binding positions include Y8, R42, 49–50, and 62–63; these read QL and QT. The GST C-terminal domain maps to 80 to 198; that stretch reads TKEERARAHQ…YLESRPQSNF (119 aa).

It belongs to the GST superfamily. Alpha family.

It carries out the reaction RX + glutathione = an S-substituted glutathione + a halide anion + H(+). Conjugation of reduced glutathione to a wide number of exogenous and endogenous hydrophobic electrophiles. This Dictyostelium discoideum (Social amoeba) protein is Putative glutathione S-transferase alpha-5 (gsta5).